The following is a 93-amino-acid chain: uncharacterized protein (93 aa).

This is an uncharacterized protein from Acidianus sp. F28 (AFV-2).